Consider the following 430-residue polypeptide: MLDPNLLRNEPDAVAEKLARRGFKLDVDKLRALEERRKVLQVQTENLQAERNSRSKSIGQAKARGEDIEPLRLEVNKLGEELDQAKTELELLLAEIRDIALAIPNTPDDSVPVGKDENDNVEVKRWGTPREFDFEVRDHVTLGEMHAGLDFAAAVKLTGARFVVMKGQIAHLHRALAQFMLDLHTEQHGYSETYVPYLVNHDTLYGTGQLPKFAGDLFHTRPLDEEAESSNYALIPTAEVPLTNLVRDEIIDEDDLPIKLTAHSPCFRSEAGSYGRDTRGLIRMHQFDKVEMVQIVRPEVSMDALEEMTGHAEKVLELLGLPYRRMALCTGDMGFGATKTFDLEVWVPAQNTYREISSCSNVGDFQARRMQARCRTKADKKTRLVHTLNGSGLAVGRALVAVMENYQQADGRIEIPEVLRPYMKGQQYIG.

T237–E239 is a binding site for L-serine. R268 to E270 lines the ATP pocket. E291 is a binding site for L-serine. E355–S358 provides a ligand contact to ATP. S391 is a binding site for L-serine.

This sequence belongs to the class-II aminoacyl-tRNA synthetase family. Type-1 seryl-tRNA synthetase subfamily. As to quaternary structure, homodimer. The tRNA molecule binds across the dimer.

It localises to the cytoplasm. It carries out the reaction tRNA(Ser) + L-serine + ATP = L-seryl-tRNA(Ser) + AMP + diphosphate + H(+). The catalysed reaction is tRNA(Sec) + L-serine + ATP = L-seryl-tRNA(Sec) + AMP + diphosphate + H(+). It functions in the pathway aminoacyl-tRNA biosynthesis; selenocysteinyl-tRNA(Sec) biosynthesis; L-seryl-tRNA(Sec) from L-serine and tRNA(Sec): step 1/1. Functionally, catalyzes the attachment of serine to tRNA(Ser). Is also able to aminoacylate tRNA(Sec) with serine, to form the misacylated tRNA L-seryl-tRNA(Sec), which will be further converted into selenocysteinyl-tRNA(Sec). This is Serine--tRNA ligase from Enterobacter sp. (strain 638).